Here is a 358-residue protein sequence, read N- to C-terminus: Ribosomal RNA-processing protein 8 (358 aa).

Positions M1–E81 are disordered. The segment covering A30–A44 has biased composition (basic residues). Phosphoserine occurs at positions 75 and 76. S-adenosyl-L-methionine is bound by residues H185, G220, D238, and C267.

This sequence belongs to the methyltransferase superfamily. RRP8 family.

The protein localises to the nucleus. Its subcellular location is the nucleolus. Functionally, probable methyltransferase required to silence rDNA. The polypeptide is Ribosomal RNA-processing protein 8 (Drosophila melanogaster (Fruit fly)).